We begin with the raw amino-acid sequence, 33 residues long: Photosystem II reaction center protein Psb30 (33 aa).

A helical membrane pass occupies residues 5 to 25 (VVAQLTVLALIVVSGPLVIGL).

Belongs to the Psb30/Ycf12 family. PSII is composed of 1 copy each of membrane proteins PsbA, PsbB, PsbC, PsbD, PsbE, PsbF, PsbH, PsbI, PsbJ, PsbK, PsbL, PsbM, PsbT, PsbX, PsbY, PsbZ, Psb30/Ycf12, peripheral proteins of the oxygen-evolving complex and a large number of cofactors. It forms dimeric complexes.

Its subcellular location is the plastid. It localises to the chloroplast thylakoid membrane. Functionally, a core subunit of photosystem II (PSII), probably helps stabilize the reaction center. In Zygnema circumcarinatum (Green alga), this protein is Photosystem II reaction center protein Psb30.